Reading from the N-terminus, the 959-residue chain is Isoleucine--tRNA ligase (959 aa).

Positions 60–70 (PYANGSLHMGH) match the 'HIGH' region motif. Glu-569 provides a ligand contact to L-isoleucyl-5'-AMP. The 'KMSKS' region signature appears at 610–614 (KMSKS). Residue Lys-613 coordinates ATP. Zn(2+)-binding residues include Cys-928, Cys-931, Cys-948, and Cys-951.

It belongs to the class-I aminoacyl-tRNA synthetase family. IleS type 1 subfamily. As to quaternary structure, monomer. The cofactor is Zn(2+).

The protein localises to the cytoplasm. The enzyme catalyses tRNA(Ile) + L-isoleucine + ATP = L-isoleucyl-tRNA(Ile) + AMP + diphosphate. Catalyzes the attachment of isoleucine to tRNA(Ile). As IleRS can inadvertently accommodate and process structurally similar amino acids such as valine, to avoid such errors it has two additional distinct tRNA(Ile)-dependent editing activities. One activity is designated as 'pretransfer' editing and involves the hydrolysis of activated Val-AMP. The other activity is designated 'posttransfer' editing and involves deacylation of mischarged Val-tRNA(Ile). The chain is Isoleucine--tRNA ligase from Gloeothece citriformis (strain PCC 7424) (Cyanothece sp. (strain PCC 7424)).